Consider the following 149-residue polypeptide: Large ribosomal subunit protein uL13 (149 aa).

This sequence belongs to the universal ribosomal protein uL13 family. In terms of assembly, part of the 50S ribosomal subunit.

Functionally, this protein is one of the early assembly proteins of the 50S ribosomal subunit, although it is not seen to bind rRNA by itself. It is important during the early stages of 50S assembly. In Prosthecochloris aestuarii (strain DSM 271 / SK 413), this protein is Large ribosomal subunit protein uL13.